Consider the following 342-residue polypeptide: MAHIVTLNTPSREDWLTQLADVVTDPDELLRLLNIDAEEKLLAGRSAKKLFALRVPRSFIDRMEKGNPDDPLLRQVLTSQDEFVIAPGFSTDPLEEQHSVVPGLLHKYHNRALLLVKGGCAVNCRYCFRRHFPYAENQGNKRNWQTALEYVAAHPELDEMIFSGGDPLMAKDHELDWLLTQLEAIPHIKRLRIHSRLPIVIPARITEALVECFARSTLQILLVNHINHANEVDETFRQAMAKLRRVGVTLLNQSVLLRDVNDNAQTLANLSNALFDAGVMPYYLHVLDKVQGAAHFMVSDDEARQIMRELLTLVSGYLVPKLAREIGGEPSKTPLDLQLRQQ.

One can recognise a Radical SAM core domain in the interval 106-329 (HKYHNRALLL…PKLAREIGGE (224 aa)). Residues cysteine 120, cysteine 124, and cysteine 127 each coordinate [4Fe-4S] cluster. Lysine 332 bears the N6-(pyridoxal phosphate)lysine mark.

It belongs to the radical SAM superfamily. KamA family. The cofactor is [4Fe-4S] cluster. Pyridoxal 5'-phosphate is required as a cofactor.

It catalyses the reaction L-lysine = D-beta-lysine. With EpmA is involved in the beta-lysylation step of the post-translational modification of translation elongation factor P (EF-P) on 'Lys-34'. EpmB appears to act before EpmA. Displays lysine 2,3-aminomutase activity, producing (R)-beta-lysine from (S)-alpha-lysine (L-lysine). Cannot use (S)-ornithine or (R)-alpha-lysine as a substrate. This Escherichia coli (strain K12) protein is L-lysine 2,3-aminomutase (epmB).